We begin with the raw amino-acid sequence, 404 residues long: MSVGMAAPRAAFACDPDASRGRLFDELPSKTRSPFRRDCDRVIHSTGFRRLKHKTQVFVYHEGDHYRTRLTHSLEVAQIARAIARQLGLDEDLTEALALAHDLGHPPFGHAGERALDACLQRYGGFDHNAQSLRVVTALEHRYPEFNGLNLTWETLEGIVKHNGPLTDRSGAPLGRYQAHGVPTGIVEFNRCFDLELWSHASLEAQVAGIADDIAYDAHDIDDGLRAGLFGVDDLGEMPLTAQMTAAIDVRYPGLDPARRGAELVRELISFLIGAAVAEAERRLIAAQPASVQAVREAGQDLIMFAPDAAEAEALIKAFLKRHMYRHPRVMRVMDDAETVVFELFARYRDHPADLPAEWLPANAGQGETEADRLRRICNFIAGMTDRYALTEHQRLFDLTPELR.

The HD domain occupies 69 to 217 (RLTHSLEVAQ…AGIADDIAYD (149 aa)).

It belongs to the dGTPase family. Type 2 subfamily.

The sequence is that of Deoxyguanosinetriphosphate triphosphohydrolase-like protein from Rhodopseudomonas palustris (strain BisB18).